The primary structure comprises 342 residues: Glucokinase (342 aa).

7 to 12 (GDIGGT) is an ATP binding site.

Belongs to the bacterial glucokinase family.

It localises to the cytoplasm. It carries out the reaction D-glucose + ATP = D-glucose 6-phosphate + ADP + H(+). The sequence is that of Glucokinase from Nostoc sp. (strain PCC 7120 / SAG 25.82 / UTEX 2576).